The following is a 748-amino-acid chain: Structure-specific endonuclease subunit SLX4 (748 aa).

Residues 62–75 show a composition bias toward polar residues; the sequence is KSVTAQKSPMTQET. Positions 62-104 are disordered; that stretch reads KSVTAQKSPMTQETTKNDTERNKDVDKSCNPVSTSHPDLGGSN. T72 is subject to Phosphothreonine; by ATR and ATM. The segment covering 76 to 88 has biased composition (basic and acidic residues); the sequence is TKNDTERNKDVDK. T113 bears the Phosphothreonine; by ATR and ATM mark. Disordered stretches follow at residues 215–236 and 277–303; these read IKTQNEGNSDKPPRARNNKGEK and EKSSNSLDNQESSQQRLWTASQLPPEL. A compositionally biased stretch (basic and acidic residues) spans 222-236; that stretch reads NSDKPPRARNNKGEK. The segment covering 277-298 has biased composition (polar residues); that stretch reads EKSSNSLDNQESSQQRLWTASQ. Phosphoserine; by ATR and ATM is present on S289. Position 319 is a phosphothreonine; by ATR and ATM (T319). 2 positions are modified to phosphoserine; by ATR and ATM: S329 and S355. The span at 591–602 shows a compositional bias: polar residues; that stretch reads ISTKDSTQNPTT. Positions 591–610 are disordered; sequence ISTKDSTQNPTTSNDIIDTS.

This sequence belongs to the SLX4 family. In terms of assembly, forms a heterodimer with SLX1. Interacts with RAD1; catalytic subunit of the RAD1-RAD10 endonuclease. Interacts with RTT107. Phosphorylated by ATR (MEC1) and ATM (TEL1) upon DNA damage. This appears to be required for the function with the RAD1-RAD10 endonuclease.

It is found in the nucleus. It localises to the cytoplasm. In terms of biological role, regulatory subunit that interacts with and increases the activity of different structure-specific endonucleases. Has several distinct roles in protecting genome stability by resolving diverse forms of deleterious DNA structures. Component of the SLX1-SLX4 structure-specific endonuclease that resolves DNA secondary structures generated during DNA repair and recombination. Has endonuclease activity towards branched DNA substrates, introducing single-strand cuts in duplex DNA close to junctions with ss-DNA. Has a preference for simple Y, 5'-flap and replication fork-like structures. It cleaves the strand bearing the 5'-non-homologous arm at the branch site junction and generates ligatable, nicked products from the 5'-flap or replication fork substrates. Plays a critical role in maintaining the integrity of the ribosomal DNA (rDNA) loci, where it has a role in re-starting stalled replication forks. Has Holliday junction resolvase activity in vitro. Interacts with the structure-specific RAD1-RAD10 endonuclease and promotes RAD1-RAD10-dependent 3'-non-homologous tail removal (NHTR) during repair of double-strand breaks by single-strand annealing. SLX4 also promotes recovery from DNA-alkylation-induced replisome stalling during DNA replication by facilitating the error-free mode of lesion bypass. This does not require SLX1 or RAD1-RAD10, but probably RTT107. This is Structure-specific endonuclease subunit SLX4 from Saccharomyces cerevisiae (strain RM11-1a) (Baker's yeast).